Reading from the N-terminus, the 184-residue chain is uncharacterized protein (184 aa).

The 4Fe-4S domain maps to R72–V135. [4Fe-4S] cluster contacts are provided by C92, C95, C100, and C118.

The cofactor is [4Fe-4S] cluster.

This is an uncharacterized protein from Archaeoglobus fulgidus (strain ATCC 49558 / DSM 4304 / JCM 9628 / NBRC 100126 / VC-16).